The primary structure comprises 1241 residues: Putative ABC transporter B family member 8 (1241 aa).

A helical membrane pass occupies residues 24–44 (FADWIDIVLMVLGSVGAIGDG). One can recognise an ABC transmembrane type-1 1 domain in the interval 33–323 (MVLGSVGAIG…ALTEIRYFSE (291 aa)). The N-linked (GlcNAc...) asparagine glycan is linked to Asn-48. 5 consecutive transmembrane segments (helical) span residues 82–102 (LYFV…GYCW), 157–177 (VPIF…SAYF), 183–203 (VVAI…GKYL), 263–283 (GLAV…AWYG), and 297–317 (IYAA…ALTE). An ABC transporter 1 domain is found at 360–596 (VEFERVTLVY…NNHYAKLVKL (237 aa)). 395–402 (GASGSGKS) is an ATP binding site. Residues Asn-571, Asn-632, and Asn-648 are each glycosylated (N-linked (GlcNAc...) asparagine). The 289-residue stretch at 676–964 (SLVGCISATT…AGSMTSDLAK (289 aa)) folds into the ABC transmembrane type-1 2 domain. The next 2 membrane-spanning stretches (helical) occupy residues 686 to 706 (FGAI…AFFA) and 716 to 736 (IHIY…LNLL). Asn-773 carries N-linked (GlcNAc...) asparagine glycosylation. Transmembrane regions (helical) follow at residues 797–815 (ISLL…IIGL) and 821–838 (LALV…CFYT). Asn-855 is a glycosylation site (N-linked (GlcNAc...) asparagine). 2 consecutive transmembrane segments (helical) span residues 899–919 (AWLA…TWAL) and 933–953 (ISAG…KVIA). In terms of domain architecture, ABC transporter 2 spans 998–1236 (IELKNIDFSY…GGQFSRLAHA (239 aa)). 1033–1040 (GTSGCGKS) provides a ligand contact to ATP. An N-linked (GlcNAc...) asparagine glycan is attached at Asn-1187.

The protein belongs to the ABC transporter superfamily. ABCB family. Multidrug resistance exporter (TC 3.A.1.201) subfamily.

The protein resides in the membrane. The sequence is that of Putative ABC transporter B family member 8 (ABCB8) from Arabidopsis thaliana (Mouse-ear cress).